Reading from the N-terminus, the 141-residue chain is Acetyltransferase YpeA (141 aa).

An N-acetyltransferase domain is found at 1-141; the sequence is MEIRVFRQED…GKRLIEDEEY (141 aa).

The protein belongs to the acetyltransferase family. YpeA subfamily.

This is Acetyltransferase YpeA from Escherichia coli O157:H7.